The following is a 245-amino-acid chain: MVNLGSIWQNLLASQAPLQSMTGNATTMAGLATYSLPQLPYAYNALEPYISAQIMELHHSKHHQTYVTNLNNALKVHVAAIASSDIPAQIAQQPAIKFNGGGHINHSLFWKNLAPAETPETNYSKAAPSLAAEIEKTWGSFDEFKKAFSAALLGIQGSGWGWLVKESTAEKGRLRIITTKDQDPVVGGEVPVFGVDMWEHAYYLQYLNGKAAYVENIWKVINWKTAEERFQGSREDAFADLKALL.

Residues 1–32 constitute a mitochondrion transit peptide; sequence MVNLGSIWQNLLASQAPLQSMTGNATTMAGLA. His-58, His-106, Asp-196, and His-200 together coordinate Mn(2+).

The protein belongs to the iron/manganese superoxide dismutase family. Homotetramer. The cofactor is Mn(2+).

The protein resides in the mitochondrion matrix. The catalysed reaction is 2 superoxide + 2 H(+) = H2O2 + O2. Functionally, destroys superoxide anion radicals which are normally produced within the cells and which are toxic to biological systems. The chain is Superoxide dismutase [Mn], mitochondrial (sod-2) from Neurospora crassa (strain ATCC 24698 / 74-OR23-1A / CBS 708.71 / DSM 1257 / FGSC 987).